The sequence spans 287 residues: mRNA-capping enzyme small subunit (287 aa).

Heterodimer of a large and a small subunit.

Its subcellular location is the virion. The catalysed reaction is a 5'-end (5'-triphosphoguanosine)-ribonucleoside in mRNA + S-adenosyl-L-methionine = a 5'-end (N(7)-methyl 5'-triphosphoguanosine)-ribonucleoside in mRNA + S-adenosyl-L-homocysteine. In terms of biological role, catalyzes the last reaction in the mRNA cap formation pathway. This is mRNA-capping enzyme small subunit from Sus scrofa (Pig).